The chain runs to 412 residues: Multifunctional CCA protein (412 aa).

Gly8 and Arg11 together coordinate ATP. Positions 8 and 11 each coordinate CTP. Mg(2+)-binding residues include Asp21 and Asp23. The ATP site is built by Arg91, Arg137, and Arg140. 3 residues coordinate CTP: Arg91, Arg137, and Arg140. The 102-residue stretch at 228-329 (TGIHTLMTLS…VKLFDSIDAW (102 aa)) folds into the HD domain.

This sequence belongs to the tRNA nucleotidyltransferase/poly(A) polymerase family. Bacterial CCA-adding enzyme type 1 subfamily. In terms of assembly, monomer. Can also form homodimers and oligomers. Requires Mg(2+) as cofactor. Ni(2+) serves as cofactor.

It catalyses the reaction a tRNA precursor + 2 CTP + ATP = a tRNA with a 3' CCA end + 3 diphosphate. The enzyme catalyses a tRNA with a 3' CCA end + 2 CTP + ATP = a tRNA with a 3' CCACCA end + 3 diphosphate. Its function is as follows. Catalyzes the addition and repair of the essential 3'-terminal CCA sequence in tRNAs without using a nucleic acid template. Adds these three nucleotides in the order of C, C, and A to the tRNA nucleotide-73, using CTP and ATP as substrates and producing inorganic pyrophosphate. tRNA 3'-terminal CCA addition is required both for tRNA processing and repair. Also involved in tRNA surveillance by mediating tandem CCA addition to generate a CCACCA at the 3' terminus of unstable tRNAs. While stable tRNAs receive only 3'-terminal CCA, unstable tRNAs are marked with CCACCA and rapidly degraded. The sequence is that of Multifunctional CCA protein from Escherichia coli O139:H28 (strain E24377A / ETEC).